Reading from the N-terminus, the 678-residue chain is Penicillin-binding protein activator LpoA (678 aa).

Positions 1–26 (MVPSTFSRLKAARCLPVVLAALIFAG) are cleaved as a signal peptide. Residue Cys27 is the site of N-palmitoyl cysteine attachment. Cys27 carries the S-diacylglycerol cysteine lipid modification. Over residues 300–310 (AADVAEQPQPQ) the composition is skewed to low complexity. 2 disordered regions span residues 300 to 340 (AADV…PVSA) and 496 to 528 (ALTG…DDQF). Residues 311 to 327 (TADSVASPAQASVSDLT) are compositionally biased toward polar residues. Composition is skewed to low complexity over residues 330-340 (QPAAQPVPVSA) and 513-528 (TTNN…DDQF).

The protein belongs to the LpoA family. In terms of assembly, interacts with PBP1a.

Its subcellular location is the cell outer membrane. Regulator of peptidoglycan synthesis that is essential for the function of penicillin-binding protein 1A (PBP1a). The chain is Penicillin-binding protein activator LpoA from Shigella flexneri serotype X (strain 2002017).